We begin with the raw amino-acid sequence, 270 residues long: MRTVFIVSDGTGITAETFSHSILAQFEMRFRKVRMPFVDTPDKAHVAVGKINEAFYNEGVPPIVFTTLVNAESNKAIRRAKAMILDMFQTFIEPLEKELGLKSTHAIGRFHQNADTEAYKNRIEAINFSLAHDDGQSHKNLEDADVILVGVSRSGKTPTSLYLAMQYGLKAANYPLIPDDFERGRLPSALYAYKQKIFGLSIDPQRLTEIRNERRPGSKYAAVENCRYEVNEAESMMRREGIKWLSSTHKSIEEIATTILQEIKVDRDNY.

150–157 (GVSRSGKT) lines the ADP pocket.

This sequence belongs to the pyruvate, phosphate/water dikinase regulatory protein family. PSRP subfamily.

It catalyses the reaction [pyruvate, water dikinase] + ADP = [pyruvate, water dikinase]-phosphate + AMP + H(+). It carries out the reaction [pyruvate, water dikinase]-phosphate + phosphate + H(+) = [pyruvate, water dikinase] + diphosphate. Bifunctional serine/threonine kinase and phosphorylase involved in the regulation of the phosphoenolpyruvate synthase (PEPS) by catalyzing its phosphorylation/dephosphorylation. The polypeptide is Putative phosphoenolpyruvate synthase regulatory protein (Cupriavidus metallidurans (strain ATCC 43123 / DSM 2839 / NBRC 102507 / CH34) (Ralstonia metallidurans)).